Consider the following 431-residue polypeptide: uncharacterized protein (431 aa).

2 4Fe-4S ferredoxin-type domains span residues 336–367 (VRPV…NGLD) and 362–391 (IDNG…MDTG).

This is an uncharacterized protein from Methanothermobacter thermautotrophicus (strain ATCC 29096 / DSM 1053 / JCM 10044 / NBRC 100330 / Delta H) (Methanobacterium thermoautotrophicum).